An 83-amino-acid polypeptide reads, in one-letter code: MADNTVTDVKKLSFERAIEELESIVKRLEDGKVPLEESVAIYERGEALKRRCEELLRQAEARVEKITTDASGRATGVAPLDVQ.

It belongs to the XseB family. Heterooligomer composed of large and small subunits.

Its subcellular location is the cytoplasm. It catalyses the reaction Exonucleolytic cleavage in either 5'- to 3'- or 3'- to 5'-direction to yield nucleoside 5'-phosphates.. Functionally, bidirectionally degrades single-stranded DNA into large acid-insoluble oligonucleotides, which are then degraded further into small acid-soluble oligonucleotides. The chain is Exodeoxyribonuclease 7 small subunit from Bradyrhizobium sp. (strain BTAi1 / ATCC BAA-1182).